A 393-amino-acid chain; its full sequence is S-adenosylmethionine synthase (393 aa).

His16 contacts ATP. Asp18 lines the Mg(2+) pocket. Residue Glu44 participates in K(+) binding. L-methionine contacts are provided by Glu57 and Gln100. Residues Gln100 to His110 are flexible loop. Residues Asp167–Lys169, Arg238–Phe239, Asp247, Arg253–Lys254, Ala270, and Lys274 contribute to the ATP site. An L-methionine-binding site is contributed by Asp247. L-methionine is bound at residue Lys278.

The protein belongs to the AdoMet synthase family. Homotetramer; dimer of dimers. Mg(2+) is required as a cofactor. K(+) serves as cofactor.

The protein resides in the cytoplasm. It catalyses the reaction L-methionine + ATP + H2O = S-adenosyl-L-methionine + phosphate + diphosphate. The protein operates within amino-acid biosynthesis; S-adenosyl-L-methionine biosynthesis; S-adenosyl-L-methionine from L-methionine: step 1/1. Catalyzes the formation of S-adenosylmethionine (AdoMet) from methionine and ATP. The overall synthetic reaction is composed of two sequential steps, AdoMet formation and the subsequent tripolyphosphate hydrolysis which occurs prior to release of AdoMet from the enzyme. The chain is S-adenosylmethionine synthase from Variovorax paradoxus (strain S110).